We begin with the raw amino-acid sequence, 282 residues long: Acetylglutamate kinase (282 aa).

Substrate-binding positions include 62–63 (GG), Arg84, and Asn178. L-arginine contacts are provided by residues Lys196, Ser214, and 266 to 269 (EIFS).

In terms of assembly, homohexamer.

It is found in the cytoplasm. It catalyses the reaction N-acetyl-L-glutamate + ATP = N-acetyl-L-glutamyl 5-phosphate + ADP. It functions in the pathway amino-acid biosynthesis; L-arginine biosynthesis; N(2)-acetyl-L-ornithine from L-glutamate: step 2/4. With respect to regulation, allosterically inhibited by arginine. Its function is as follows. Catalyzes the ATP-dependent phosphorylation of N-acetyl-L-glutamate. This is Acetylglutamate kinase from Thermotoga maritima (strain ATCC 43589 / DSM 3109 / JCM 10099 / NBRC 100826 / MSB8).